A 132-amino-acid chain; its full sequence is Small ribosomal subunit protein uS8 (132 aa).

This sequence belongs to the universal ribosomal protein uS8 family. As to quaternary structure, part of the 30S ribosomal subunit. Contacts proteins S5 and S12.

One of the primary rRNA binding proteins, it binds directly to 16S rRNA central domain where it helps coordinate assembly of the platform of the 30S subunit. The chain is Small ribosomal subunit protein uS8 from Arthrobacter sp. (strain FB24).